The primary structure comprises 171 residues: S-ribosylhomocysteine lyase (171 aa).

3 residues coordinate Fe cation: His54, His58, and Cys128.

It belongs to the LuxS family. In terms of assembly, homodimer. It depends on Fe cation as a cofactor.

The enzyme catalyses S-(5-deoxy-D-ribos-5-yl)-L-homocysteine = (S)-4,5-dihydroxypentane-2,3-dione + L-homocysteine. Involved in the synthesis of autoinducer 2 (AI-2) which is secreted by bacteria and is used to communicate both the cell density and the metabolic potential of the environment. The regulation of gene expression in response to changes in cell density is called quorum sensing. Catalyzes the transformation of S-ribosylhomocysteine (RHC) to homocysteine (HC) and 4,5-dihydroxy-2,3-pentadione (DPD). The chain is S-ribosylhomocysteine lyase from Aliarcobacter butzleri (strain RM4018) (Arcobacter butzleri).